A 3530-amino-acid chain; its full sequence is MAKEEDEEKKAKKGKKGKKAPEPEKPKRSLKGTSRLFMGFRDRTPKISKKGQFRSASAFFWGLHTGPQKTKRKRKARTVLKSTSKLMTQMRMGKKKRAMKGKKPSFMVIRFPGRRGYGRLRPRARSLSKASTAINWLTKKFLLKKAEESGSEQATVDAWLQRSSSRMGSRKLPFPSGAEILRPGGRLRRFPRSRSIYASGEPLGFLPFEDEAPFHHSGSRKSLYGLEGFQDLGEYYDYHRDGDDYYDRQSLHRYEEQEPYLAGLGPYSPAWPPYGDHYYGYPPEDPYDYYHPDYYGGPFDPGYTYGYGYDDYEPPYAPPSGYSSPYSYHDGYEGEAHPYGYYLDPYAPYDAPYPPYDLPYHTPYDVPYFDPYGVHYTVPYAEGVYGGGDEAIYPPEVPYFYPEESASAFVYPWVPPPIPSPHNPYAHAMDDIAELEEPEDAGVERQGTSFRLPSAAFFEQQGMDKPARSKLSLIRKFRLFPRPQVKLFGKEKLEVPLPPSLDIPLPLGDADEEEDEEELPPVSAVPYGHPFWGFLTPRQRNLQRALSAFGAHRGLGFGPEFGRPVPRPATSLARFLKKTLSEKKPIARLRGSQKARAGGPAVREAAYKRFGYKLAGMDPEKPGTPIVLRRAQPRARSSNDARRPPAPQPAPRTLSHWSALLSPPVPPRPPSSGPPPAPPLSPALSGLPRPASPYGSLRRHPPPWAAPAHVPPAPQASWWAFVEPPAVSPEVPPDLLAFPGPRPSFRGSRRRGAAFGFPGASPRASRRRAWSPLASPQPSLRSSPGLGYCSPLAPPSPQLSLRTGPFQPPFLPPARRPRSLQESPAPRRAAGRLGPPGSPLPGSPRPPSPPLGLCHSPRRSSLNLPSRLPHTWRRLSEPPTRAVKPQVRLPFHRPPRAGAWRAPLEHRESPREPEDSETPWTVPPLAPSWDVDMPPTQRPPSPWPGGAGSRRGFSRPPPVPENPFLQLLGPVPSPTLQPEDPAADMTRVFLGRHHEPGPGQLTKSAGPTPEKPEEEATLGDPQLPAETKPPTPAPPKDVTPPKDITPPKDVLPEQKTLRPSLSYPLAACDQTRATWPPWHRWGTLPQAAAPLAPIRAPEPLPKGGERRQAAPGRFAVVMPRVQKLSSFQRVGPATLKPQVQPIQDPKPRACSLRWSCLWLRADAYGPWPRVHTHPQSCHLGPGAACLSLRGSWEEVGPPSWRNKMHSIRNLPSMRFREQHGEDGVEDMTQLEDLQETTVLSNLKIRFERNLIYTYIGSILVSVNPYQMFGIYGPEQVQQYNGRALGENPPHLFAVANLAFAKMLDAKQNQCIIISGESGSGKTEATKLILRYLAAMNQKREVMQQIKILEATPLLESFGNAKTVRNDNSSRFGKFVEIFLEGGVISGAITSQYLLEKSRIVFQAKNERNYHIFYELLAGLPAQLRQAFSLQEAETYYYLNQGGNCEIAGKSDADDFRRLLAAMEVLGFSSEDQDSIFRILASILHLGNVYFEKYETDAQEVASVVSAREIQAVAELLQISPEGLQKAITFKVTETMREKIFTPLTVESAVDARDAIAKVLYALLFSWLITRVNALVSPRQDTLSIAILDIYGFEDLSFNSFEQLCINYANENLQYLFNKIVFQEEQEEYIREQIDWQEITFADNQPCINLISLKPYGILRILDDQCCFPQATDHTFLQKCHYHHGANPLYSKPKMPLPEFTIKHYAGKVTYQVHKFLDKNHDQVRQDVLDLFVRSRTRVVAHLFSSHAPQAAPQRLGKSSSVTRLYKAHTVAAKFQQSLLDLVEKMERCNPLFMRCLKPNHKKEPGLFEPDVVMAQLRYSGVLETVRIRKEGFPVRLPFQGFIDRYCCLVALKHDLPANGDMCVSVLSRLCKVMPNMYRVGVSKLFLKEHLYQLLESMREHVLNLAALTLQRCLRGFFIKRRFRSLRHKIILLQSRARGYLARQRYQQMRRSLVKFRSLVHAYVSRRRYLKLRAEWRCQVEGALLWEQEELSKREVVAVGHLEVPAELAGLLQAVAGLGLAQVPQVAPVRTPRLQAEPRVTLPLDINNYPMAKFVQCHFKEPAFGMLTVPLRTPLTQLPAEHHAEAVSIFKLILRFMGDPHLHGARENIFGNYIVQKGLAVPELRDEILAQLANQVWHNHNAHNAERGWLLLAACLSGFAPSPCFNKYLLKFVSDYGRNGFQAVCQHRLMQAMGRAQQQGSGAARTLPPTQLEWTATYEKASMALDVGCFNGDQFSCPVHSWSTGEEVAGDILRHRGLADGWRGWTVAMKNGVQWAELAGHDYVLDLVSDLELLRDFPRQKSYFIVGTEGPAASRGGPKVVFGNSWDSDEDMSTRPQPQEHMPKVLDSDGYSSHNQDGTNGETEAQRGTATHQESDSLGEPAVPHKGLDCYLDSLFDPVLSYGDADLEKPTAIAYRMKGGGQPGGGSSSGTEDTPRRPPEPKPIPGLDASTLALQQAFIHKQAVLLAREMTLQATALQQQPLSAALRSLPAEKPPAPEAQPTSVGTGPPAKPVLLRATPKPLAPAPLAKAPRLPIKPVAAPVLAQDQASPETTSPSPELVRYSTLNSEHFPQPTQQIKNIVRQYQQPFRGGRPEALRKDGGKVFMKRPDPHEEALMILKGQMTHLAAAPGTQVSREAVALVKPVTSAPRPSMAPTSALPSRSLEPPEELTQTRLHRLINPNFYGYQDAPWKIFLRKEVFYPKDSYSHPVQLDLLFRQILHDTLSEACLRISEDERLRMKALFAQNQLDTQKPLVTESVKRAVVSTARDTWEVYFSRIFPATGSVGTGVQLLAVSHVGIKLLRMVKGGQEAGGQLRVLRAYSFADILFVTMPSQNMLEFNLASEKVILFSARAHQVKTLVDDFILELKKDSDYVVAVRNFLPEDPALLAFHKGDIIHLQPLEPPRVGYSAGCVVRRKVVYLEELRRRGPDFGWRFGTIHGRVGRFPSELVQPAAAPDFLQLPTEPGRGRAAAVAAAVASAAAAQEVGRRREGPPVRARSADHGEDALALPPYTMLEFAQKYFRDPQRRPQDGLRLKSKEPRESRTLEDMLCFTKTPLQESLIELSDSSLSKMATDMFLAVMRFMGDAPLKGQSDLDVLCNLLKLCGDHEVMRDECYCQVVKQITDNTSSKQDSCQRGWRLLYIVTAYHSCSEVLHPHLTRFLQDVSRTPGLPFQGIAKACEQNLQKTLRFGGRLELPSSIELRAMLAGRSSKRQLFLLPGGLERHLKIKTCTVALDVVEEICAEMALTRPEAFNEYVIFVVTNRGQHVCPLSRRAYILDVASEMEQVDGGYMLWFRRVLWDQPLKFENELYVTMHYNQVLPDYLKGLFSSVPASRPSEQLLQQVSKLASLQHRAKDHFYLPSVREVQEYIPAQLYRTTAGSTWLNLVSQHRQQTQALSPHQARAQFLGLLSALPMFGSSFFFIQSCSNIAVPAPCILAINHNGLNFLSTETHELMVKFPLKEIQSTRTQRPTANSSYPYVEIALGDVAAQRTLQLQLEQGLELCRVVAVHVENLLSAHEKRLTLPPSEITLL.

Disordered regions lie at residues 1-46, 615-710, and 730-1057; these read MAKE…RTPK, AGMD…PAHV, and EVPP…QKTL. Residues 663-681 are compositionally biased toward pro residues; that stretch reads PPVPPRPPSSGPPPAPPLS. Low complexity-rich tracts occupy residues 682 to 693, 753 to 763, and 823 to 835; these read PALSGLPRPASP, AAFGFPGASPR, and SPAP…RLGP. Residues 836-850 show a composition bias toward pro residues; the sequence is PGSPLPGSPRPPSPP. Over residues 859–869 the composition is skewed to low complexity; the sequence is RSSLNLPSRLP. A compositionally biased stretch (basic and acidic residues) spans 903–913; sequence PLEHRESPREP. Positions 1027–1038 are enriched in pro residues; that stretch reads TKPPTPAPPKDV. The 678-residue stretch at 1222 to 1899 folds into the Myosin motor domain; it reads DGVEDMTQLE…LYQLLESMRE (678 aa). 1315–1322 contributes to the ATP binding site; that stretch reads GESGSGKT. Residues 1323-1350 adopt a coiled-coil conformation; the sequence is EATKLILRYLAAMNQKREVMQQIKILEA. The tract at residues 1792-1799 is actin-binding; it reads FMRCLKPN. The interval 1888 to 2029 is neck or regulatory domain; it reads EHLYQLLESM…AQVPQVAPVR (142 aa). 3 IQ domains span residues 1902-1924, 1925-1954, and 1955-1976; these read LNLA…RFRS, LRHK…SLVK, and FRSL…AEWR. The segment at 2030-3530 is tail; the sequence is TPRLQAEPRV…TLPPSEITLL (1501 aa). Positions 2065 to 2217 constitute a MyTH4 1 domain; that stretch reads MLTVPLRTPL…PTQLEWTATY (153 aa). Disordered regions lie at residues 2311–2381, 2414–2446, 2490–2509, and 2644–2665; these read AASR…GEPA, YRMK…IPGL, AEKP…GPPA, and TSAP…LEPP. Positions 2349-2371 are enriched in polar residues; sequence GYSSHNQDGTNGETEAQRGTATH. The segment covering 2417-2427 has biased composition (gly residues); the sequence is KGGGQPGGGSS. In terms of domain architecture, SH3 spans 2867–2953; it reads KDSDYVVAVR…PSELVQPAAA (87 aa). One can recognise a MyTH4 2 domain in the interval 3050–3204; that stretch reads FTKTPLQESL…PSSIELRAML (155 aa). Residues 3209-3530 form the FERM domain; that stretch reads SKRQLFLLPG…TLPPSEITLL (322 aa).

The protein belongs to the TRAFAC class myosin-kinesin ATPase superfamily. Myosin family. As to quaternary structure, interacts with the third PDZ domain of WHRN which is necessary for localization of WHRN to stereocilium tips. Interacts with EPS8. Interacts with FASLG. As to expression, highly expressed in pituitary. Also expressed at lower levels in adult brain, kidney, liver, lung, pancreas, placenta and skeletal muscle. Not expressed in brain. In the pituitary, highly expressed in anterior gland cells.

Its subcellular location is the cell projection. It is found in the stereocilium. The protein localises to the cytoplasm. The protein resides in the cytoskeleton. Its function is as follows. Myosins are actin-based motor molecules with ATPase activity. Unconventional myosins serve in intracellular movements. Their highly divergent tails are presumed to bind to membranous compartments, which would be moved relative to actin filaments. Required for the arrangement of stereocilia in mature hair bundles. This is Unconventional myosin-XV (MYO15A) from Homo sapiens (Human).